The following is a 447-amino-acid chain: Cytochrome P450 monooxygenase aunB (447 aa).

Heme is bound at residue Cys386.

Belongs to the cytochrome P450 family. Requires heme as cofactor.

The enzyme catalyses 2 fonsecin B + NADPH + O2 + H(+) = aurasperone B + NADP(+) + 2 H2O. It carries out the reaction 2 rubrofusarin B + NADPH + O2 + H(+) = aurasperone A + NADP(+) + 2 H2O. Its pathway is secondary metabolite biosynthesis. In terms of biological role, cytochrome P450 monooxygenase; part of the gene cluster that mediates the biosynthesis of aurasperone B, a dimeric gamma-naphthopyrone. The first step in the biosynthesis of aurasperone B is the production of gamma-naphthopyrone precursor YWA1 by the non-reducing polyketide synthase albA, via condensation of one acetyl-CoA starter unit with 6 malonyl-CoA units. YWA1 is then methylated by aunE at position C-6 to yield foncesin which is further methylated at position C-8 by aunD to produce fonsecin B. A key enzyme in the biosynthetic pathway is the cytochrome P450 monooxygenase aunB which catalyzes the oxidative dimerization of fonsecin B to aurasperone B. AunB also catalyzes the oxidative dimerization of rubrofusarin B into aurasperone A. The sequence is that of Cytochrome P450 monooxygenase aunB from Aspergillus niger (strain ATCC MYA-4892 / CBS 513.88 / FGSC A1513).